Here is a 1029-residue protein sequence, read N- to C-terminus: Myosin phosphatase Rho-interacting protein (1029 aa).

An interaction with F-actin region spans residues M1–T387. Residues K43–R150 form the PH 1 domain. The tract at residues N152 to V267 is disordered. Low complexity predominate over residues S179–S195. A phosphoserine mark is found at S198, S224, S226, S230, and S232. The span at S226–P237 shows a compositional bias: low complexity. Over residues T245–V267 the composition is skewed to basic and acidic residues. Residues S271, S275, S294, and S297 each carry the phosphoserine modification. Disordered regions lie at residues A279–S306 and P333–E383. T300 carries the phosphothreonine modification. The span at R338–A354 shows a compositional bias: basic and acidic residues. At S369 the chain carries Phosphoserine. Positions L391–L487 constitute a PH 2 domain. A disordered region spans residues S490 to A614. A compositionally biased stretch (polar residues) spans P492–D509. Residue S497 is modified to Phosphoserine. The span at P527 to E550 shows a compositional bias: basic and acidic residues. Residues E550 to S828 are interaction with RHOA. Residues R562–S571 are compositionally biased toward polar residues. Basic and acidic residues predominate over residues E583–R592. S622 carries the post-translational modification Phosphoserine. T650 bears the Phosphothreonine mark. Residues S675 to E979 are a coiled coil. Position 804 is a phosphoserine (S804). Positions S828–L883 are interaction with PPP1R12A. Residues S981, S997, S1018, and S1020 each carry the phosphoserine modification.

As to quaternary structure, binds RHOA, PPP1R12A/MBS and PPP1R12C/MBS85 through adjacent coiled coil domains. Interacts with MYZAP. Binds F-actin through its N-terminus.

The protein localises to the cytoplasm. It is found in the cytoskeleton. Functionally, targets myosin phosphatase to the actin cytoskeleton. Required for the regulation of the actin cytoskeleton by RhoA and ROCK1. Depletion leads to an increased number of stress fibers in smooth muscle cells through stabilization of actin fibers by phosphorylated myosin. Overexpression of MRIP as well as its F-actin-binding region leads to disassembly of stress fibers in neuronal cells. This Rattus norvegicus (Rat) protein is Myosin phosphatase Rho-interacting protein (Mprip).